A 506-amino-acid polypeptide reads, in one-letter code: Lysine--tRNA ligase (506 aa).

Residues Glu416 and Glu423 each contribute to the Mg(2+) site.

It belongs to the class-II aminoacyl-tRNA synthetase family. Homodimer. Mg(2+) serves as cofactor.

The protein resides in the cytoplasm. The enzyme catalyses tRNA(Lys) + L-lysine + ATP = L-lysyl-tRNA(Lys) + AMP + diphosphate. In Bordetella parapertussis (strain 12822 / ATCC BAA-587 / NCTC 13253), this protein is Lysine--tRNA ligase.